The sequence spans 1164 residues: MKKNTDSEMDQRLGYKFLVPDPKAGVFYRPLHFQYVSYSNFILHRLHEILTVKRPLLSFKNNTERIMIEISNVKVTPPDYSPIIASIKGKSYDALATFTVNIFKEVMTKEGISITKISSYEGKDSHLIKIPLLIGYGNKNPLDTAKYLVPNVIGGVFINKQSVEKVGINLVEKITTWPKFRVVKPNSFTFSFSSVSPPNVLPTRYRHYKISLDISQLEALNISSTKTFITVNIVLLSQYLSRVSLEFIRRSLSYDMPPEVVYLVNAIIDSAKRITESITDFNIDTYINDLVEAEHIKQKSQLTINEFKYEMLHNFLPHMNYTPDQLKGFYMISLLRKFLYCIYHTSRYPDRDSMVCHRILTYGKYFETLAHDELENYIGNIRNDIMNNHKNRGTYAVNIHVLTTPGLNHAFSSLLSGKFKKSDGSYRTHPHYSWMQNISIPRSVGFYPDQVKISKMFSVRKYHPSQYLYFCSSDVPERGPQVGLVSQLSVLSSITNILTSEYLDLEKKICEYIRSYYKDDISYFETGFPITIENALVASLNPNMICDFVTDFRRRKRMGFFGNLEVGITLVRDHMNEIRINIGAGRLVRPFLVVDNGELMMDVCPELESRLDDMTFSDIQKEFPHVIEMVDIEQFTFSNVCESVQKFRMMSKDERKQYDLCDFPAEFRDGYVASSLVGINHNSGPRAILGCAQAKQAISCLSSDIRNKIDNGIHLMYPERPIVISKALETSKIAANCFGQHVTIALMSYKGINQEDGIIIKKQFIQRGGLDIVTAKKHQVEIPLENFNNKERDRSNAYSKLESNGLVRLNAFLESGDAMARNISSRTLEDDFARDNQISFDVSEKYTDMYKSRVERVQVELTDKVKVRVLTMKERRPILGDKFTTRTSQKGTVAYVADETELPYDENGITPDVIINSTSIFSRKTISMLIEVILTAAYSAKPYNNKGENRPVCFPSSNETSIDTYMQFAKQCYEHSNPKLSDEELSDKIFCEKILYDPETDKPYASKVFFGPIYYLRLRHLTQDKATVRCRGKKTKLIRQANEGRKRGGGIKFGEMERDCLIAHGAANTITEVLKDSEEDYQDVYVCENCGDIAAQIKGINTCLRCSKLNLSPLLTKIDTTHVSKVFLTQMNARGVKVKLDFERRPPSFYKPLDKVDLKPSFLV.

It belongs to the RNA polymerase beta chain family. In terms of assembly, the DNA-dependent RNA polymerase used for intermediate and late genes expression consists of eight subunits 147 kDa, 133 kDa, 35 kDa, 30 kDa, 22 kDa, 19 kDa, 18 kDa and 7 kDa totalling more than 500 kDa in mass. The same holoenzyme, with the addition of the transcription-specificity factor RAP94, is used for early gene expression.

Its subcellular location is the virion. The catalysed reaction is RNA(n) + a ribonucleoside 5'-triphosphate = RNA(n+1) + diphosphate. In terms of biological role, part of the DNA-dependent RNA polymerase which catalyzes the transcription of viral DNA into RNA using the four ribonucleoside triphosphates as substrates. Responsible for the transcription of early, intermediate and late genes. DNA-dependent RNA polymerase associates with the early transcription factor (ETF), itself composed of OPG118 and OPG133, thereby allowing the early genes transcription. Late transcription, and probably also intermediate transcription, require newly synthesized RNA polymerase. This is DNA-directed RNA polymerase 133 kDa polypeptide (OPG151) from Homo sapiens (Human).